The primary structure comprises 108 residues: MLAKGAEEGRSGGPRPAITLPGSLHFTCDLKTSPYCLTRAELMEHLPLRVAVHSMSPCHRSCFCGELKRGHPWNTPQVSSFPSSTTSLSHSCTTSHLDCSQQVESGSK.

The tract at residues 75-94 is disordered; that stretch reads TPQVSSFPSSTTSLSHSCTT. The span at 79–94 shows a compositional bias: low complexity; sequence SSFPSSTTSLSHSCTT.

This is an uncharacterized protein from Homo sapiens (Human).